The sequence spans 383 residues: Inactive serine protease 54 (383 aa).

The signal sequence occupies residues 1–20 (MAEMRGMLLMLLYISHSSSA). Positions 21 to 258 (ICGIQKATIA…YSDWITAKTR (238 aa)) constitute a Peptidase S1 domain. An N-linked (GlcNAc...) asparagine glycan is attached at Asn113. 3 disulfides stabilise this stretch: Cys154/Cys216, Cys185/Cys195, and Cys206/Cys237. The interval 305–334 (QGQRMSTKSNKQKDAGQNFRVNRQPETSGP) is disordered. The span at 323–334 (FRVNRQPETSGP) shows a compositional bias: polar residues.

It belongs to the peptidase S1 family. Plasma kallikrein subfamily.

Its subcellular location is the secreted. This chain is Inactive serine protease 54 (Prss54), found in Mus musculus (Mouse).